The chain runs to 530 residues: Nectin-2 (530 aa).

Residues 1–31 (MARAAVLPPSRLSPTLPLLPLLLLLLQETGA) form the signal peptide. An Ig-like V-type domain is found at 32 to 147 (QDVRVRVLPE…NGTRRGVTWL (116 aa)). Residues 32–351 (QDVRVRVLPE…STAGAGATGG (320 aa)) lie on the Extracellular side of the membrane. Cysteine 54 and cysteine 131 are joined by a disulfide. N-linked (GlcNAc...) asparagine glycans are attached at residues asparagine 128 and asparagine 138. Ig-like C2-type domains are found at residues 153 to 247 (PENH…VTLS) and 252 to 337 (PEVS…VILV). 2 cysteine pairs are disulfide-bonded: cysteine 174-cysteine 229 and cysteine 274-cysteine 320. Asparagine 315 carries an N-linked (GlcNAc...) asparagine glycan. A helical transmembrane segment spans residues 352–372 (IIGGIIAAIIATAVAGTGILI). The Cytoplasmic segment spans residues 373 to 530 (CRQQRKEQRL…DFFVSRAMYV (158 aa)). Residues 382–407 (LQAADEEEELEGPPSYKPPTPKAKLE) are disordered. Threonine 401 is subject to Phosphothreonine. Serine 424 carries the post-translational modification Phosphoserine.

The protein belongs to the nectin family. As to quaternary structure, can form trans-heterodimers with NECTIN3. Interacts with CD226 or with PVRIG; these interactions are competitive and have a differential functional outcome on T-cell activation, either positive or negative, respectively. Binds with low affinity to TIGIT. Brain, spinal cord, spleen, kidney, heart and liver.

It localises to the cell membrane. Its function is as follows. Modulator of T-cell signaling. Can be either a costimulator of T-cell function, or a coinhibitor, depending on the receptor it binds to. Upon binding to CD226, stimulates T-cell proliferation and cytokine production, including that of IL2, IL5, IL10, IL13, and IFNG. Upon interaction with PVRIG, inhibits T-cell proliferation. These interactions are competitive. Probable cell adhesion protein. This Mus musculus (Mouse) protein is Nectin-2.